We begin with the raw amino-acid sequence, 437 residues long: Putative galacturan 1,4-alpha-galacturonidase A (437 aa).

Positions 1–20 (MKLSGSSALLLLGFGLLGHA) are cleaved as a signal peptide. 6 N-linked (GlcNAc...) asparagine glycosylation sites follow: N30, N101, N110, N161, N196, and N203. The stretch at 222–243 (SDHVTITNWVYEGGDDAVAFKP) is one PbH1 1 repeat. D236 (proton donor) is an active-site residue. 8 N-linked (GlcNAc...) asparagine glycosylation sites follow: N244, N252, N278, N324, N352, N371, N382, and N387. PbH1 repeat units follow at residues 245 to 265 (STNI…AFGS), 276 to 302 (VENI…YFKS), and 322 to 343 (VRNV…YIDT). C396 and C402 are disulfide-bonded.

The protein belongs to the glycosyl hydrolase 28 family.

It localises to the secreted. It catalyses the reaction [(1-&gt;4)-alpha-D-galacturonosyl](n) + H2O = alpha-D-galacturonate + [(1-&gt;4)-alpha-D-galacturonosyl](n-1). Functionally, specific in hydrolyzing the terminal glycosidic bond of polygalacturonic acid and oligogalacturonates. The sequence is that of Putative galacturan 1,4-alpha-galacturonidase A (rgxA) from Aspergillus flavus (strain ATCC 200026 / FGSC A1120 / IAM 13836 / NRRL 3357 / JCM 12722 / SRRC 167).